Consider the following 147-residue polypeptide: Large ribosomal subunit protein uL11 (147 aa).

Belongs to the universal ribosomal protein uL11 family. In terms of assembly, part of the ribosomal stalk of the 50S ribosomal subunit. Interacts with L10 and the large rRNA to form the base of the stalk. L10 forms an elongated spine to which L12 dimers bind in a sequential fashion forming a multimeric L10(L12)X complex. Post-translationally, one or more lysine residues are methylated.

Functionally, forms part of the ribosomal stalk which helps the ribosome interact with GTP-bound translation factors. In Parabacteroides distasonis (strain ATCC 8503 / DSM 20701 / CIP 104284 / JCM 5825 / NCTC 11152), this protein is Large ribosomal subunit protein uL11.